We begin with the raw amino-acid sequence, 479 residues long: Ribulose bisphosphate carboxylase large chain (479 aa).

Residues 1-2 constitute a propeptide that is removed on maturation; sequence MS. The residue at position 3 (P3) is an N-acetylproline. K14 is subject to N6,N6,N6-trimethyllysine. The substrate site is built by N123 and T173. The Proton acceptor role is filled by K175. K177 serves as a coordination point for substrate. K201, D203, and E204 together coordinate Mg(2+). An N6-carboxylysine modification is found at K201. The active-site Proton acceptor is the H294. Residues R295, H327, and S379 each contribute to the substrate site.

This sequence belongs to the RuBisCO large chain family. Type I subfamily. In terms of assembly, heterohexadecamer of 8 large chains and 8 small chains; disulfide-linked. The disulfide link is formed within the large subunit homodimers. Mg(2+) serves as cofactor. Post-translationally, the disulfide bond which can form in the large chain dimeric partners within the hexadecamer appears to be associated with oxidative stress and protein turnover.

The protein localises to the plastid. It localises to the chloroplast. The catalysed reaction is 2 (2R)-3-phosphoglycerate + 2 H(+) = D-ribulose 1,5-bisphosphate + CO2 + H2O. The enzyme catalyses D-ribulose 1,5-bisphosphate + O2 = 2-phosphoglycolate + (2R)-3-phosphoglycerate + 2 H(+). RuBisCO catalyzes two reactions: the carboxylation of D-ribulose 1,5-bisphosphate, the primary event in carbon dioxide fixation, as well as the oxidative fragmentation of the pentose substrate in the photorespiration process. Both reactions occur simultaneously and in competition at the same active site. This chain is Ribulose bisphosphate carboxylase large chain, found in Ananas comosus (Pineapple).